The primary structure comprises 217 residues: Aprataxin-like protein (217 aa).

One can recognise an HIT domain in the interval 6 to 139 (ALKNYVTSPE…HIHVISKDFH (134 aa)). 3 interaction with DNA regions span residues 34-38 (DSFPK), 121-132 (HSVPSMANLHIH), and 144-148 (KNKKH). The active-site Nucleophile is the His-130. Positions 188, 191, 205, and 209 each coordinate Zn(2+).

It localises to the nucleus. It is found in the cytoplasm. The catalysed reaction is a 5'-end adenosine-5'-diphospho-5'-2'-deoxyribonucleoside-DNA + H2O = a 5'-end 5'-phospho-2'-deoxyribonucleoside-DNA + AMP + 2 H(+). It carries out the reaction a 5'-end adenosine-5'-diphospho-5'-ribonucleoside-2'-deoxyribonucleotide-DNA + H2O = a 5'-end 5'-phospho-ribonucleoside-2'-deoxyribonucleotide-DNA + AMP + 2 H(+). It catalyses the reaction a 3'-end 2'-deoxyribonucleotide-3'-diphospho-5'-guanosine-DNA + H2O = a 3'-end 2'-deoxyribonucleotide 3'-phosphate-DNA + GMP + 2 H(+). In terms of biological role, DNA-binding protein involved in single-strand DNA break repair, double-strand DNA break repair and base excision repair. Resolves abortive DNA ligation intermediates formed either at base excision sites, or when DNA ligases attempt to repair non-ligatable breaks induced by reactive oxygen species. Catalyzes the release of adenylate groups covalently linked to 5'-phosphate termini, resulting in the production of 5'-phosphate termini that can be efficiently rejoined. Likewise, catalyzes the release of 3'-linked guanosine (DNAppG) and inosine (DNAppI) from DNA, but has higher specific activity with 5'-linked adenosine (AppDNA). This is Aprataxin-like protein (HNT3) from Saccharomyces cerevisiae (strain ATCC 204508 / S288c) (Baker's yeast).